Consider the following 259-residue polypeptide: Thrombin-like enzyme gyroxin B1.7 (259 aa).

An N-terminal signal peptide occupies residues 1-18 (MVLIRVLANLLILQLSYA). The propeptide occupies 19–259 (QKSSELVIGG…AGNTAVTCPP (241 aa)). One can recognise a Peptidase S1 domain in the interval 25–250 (VIGGDECNIN…DTEWIQSIIA (226 aa)). 5 cysteine pairs are disulfide-bonded: Cys31-Cys162, Cys49-Cys65, Cys141-Cys211, Cys173-Cys190, and Cys201-Cys226. The active-site Charge relay system is the His64. N-linked (GlcNAc...) asparagine glycosylation occurs at Asn102. Asp109 acts as the Charge relay system in catalysis. Ser205 functions as the Charge relay system in the catalytic mechanism.

The protein belongs to the peptidase S1 family. Snake venom subfamily. In terms of assembly, monomer. Expressed by the venom gland.

Its subcellular location is the secreted. Functionally, thrombin-like snake venom serine protease. Displays a specificity similar to trypsin. Releases only fibrinopeptide A in the conversion of fibrinogen to fibrin. Shows coagulant, esterase and amidase activities. Reversibly increases the permeability of the blood brain barrier (BBB) in mice. Induces the barrel rotation syndrome in mice, which is manifested by gyroxin-like, rapid rolling motions. This syndrome may be due to its effect on BBB permeability, and certainly also to other actions affecting endogenous substrates present in the endothelium, nervous tissues or blood. In Crotalus durissus terrificus (South American rattlesnake), this protein is Thrombin-like enzyme gyroxin B1.7.